The following is a 344-amino-acid chain: Arginine N-succinyltransferase (344 aa).

Succinyl-CoA is bound at residue Leu-125. His-229 serves as the catalytic Proton donor.

Belongs to the arginine N-succinyltransferase family.

The enzyme catalyses succinyl-CoA + L-arginine = N(2)-succinyl-L-arginine + CoA + H(+). The protein operates within amino-acid degradation; L-arginine degradation via AST pathway; L-glutamate and succinate from L-arginine: step 1/5. In terms of biological role, catalyzes the transfer of succinyl-CoA to arginine to produce N(2)-succinylarginine. The polypeptide is Arginine N-succinyltransferase (Shigella boydii serotype 4 (strain Sb227)).